We begin with the raw amino-acid sequence, 51 residues long: Epididymal sperm protein E (51 aa).

Residues 8–39 (CVRCRRKTPSFNSKTVTFRNKRRAIRSHCAYC) fold into a zinc finger.

In terms of tissue distribution, sperm.

The protein localises to the nucleus. The sequence is that of Epididymal sperm protein E from Sepia officinalis (Common cuttlefish).